The primary structure comprises 430 residues: Glutamate-1-semialdehyde 2,1-aminomutase 2 (430 aa).

K269 carries the post-translational modification N6-(pyridoxal phosphate)lysine.

The protein belongs to the class-III pyridoxal-phosphate-dependent aminotransferase family. HemL subfamily. As to quaternary structure, homodimer. The cofactor is pyridoxal 5'-phosphate.

It localises to the cytoplasm. The catalysed reaction is (S)-4-amino-5-oxopentanoate = 5-aminolevulinate. Its pathway is porphyrin-containing compound metabolism; protoporphyrin-IX biosynthesis; 5-aminolevulinate from L-glutamyl-tRNA(Glu): step 2/2. The chain is Glutamate-1-semialdehyde 2,1-aminomutase 2 from Bacillus pumilus (strain SAFR-032).